The primary structure comprises 555 residues: Bifunctional epoxide hydrolase 2 (555 aa).

A phosphatase region spans residues 1–224 (MTLRAAVFDL…KVTGIQLLNT (224 aa)). Mg(2+)-binding residues include Asp-9 and Asp-11. Lys-43 is subject to N6-acetyllysine. At Lys-55 the chain carries N6-succinyllysine. 123–124 (TN) contacts phosphate. Asp-185 lines the Mg(2+) pocket. Lys-191 and Lys-215 each carry N6-acetyllysine. The segment at 235-555 (SDMSHGYVTV…ARNPPVVSKM (321 aa)) is epoxide hydrolase. The AB hydrolase-1 domain occupies 259–531 (PAVCLCHGFP…CGHWTQMDKP (273 aa)). Asp-335 serves as the catalytic Nucleophile. Ser-370 is modified (phosphoserine). Position 383 (Tyr-383) interacts with substrate. 2 positions are modified to N6-succinyllysine: Lys-421 and Lys-455. Catalysis depends on Tyr-466, which acts as the Proton donor. Cys-522 is lipidated: S-(15-deoxy-Delta12,14-prostaglandin J2-9-yl)cysteine. The active-site Proton acceptor is His-524. A Microbody targeting signal motif is present at residues 553–555 (SKM). Lys-554 is modified (N6-succinyllysine).

Belongs to the AB hydrolase superfamily. Epoxide hydrolase family. Homodimer. The cofactor is Mg(2+). The N-terminus is blocked. In terms of processing, the covalent modification of cysteine by 15-deoxy-Delta12,14-prostaglandin-J2 is autocatalytic and reversible. It may occur as an alternative to other cysteine modifications, such as S-nitrosylation and S-palmitoylation.

Its subcellular location is the cytoplasm. The protein resides in the peroxisome. It carries out the reaction an epoxide + H2O = an ethanediol. It catalyses the reaction (9S,10S)-10-hydroxy-9-(phosphooxy)octadecanoate + H2O = (9S,10S)-9,10-dihydroxyoctadecanoate + phosphate. The enzyme catalyses 12-phosphooxy-(9Z)-octadecenoate + H2O = 12-hydroxy-(9Z)-octadecenoate + phosphate. The catalysed reaction is 12-phosphooxy-(9E)-octadecenoate + H2O = 12-hydroxy-(9E)-octadecenoate + phosphate. It carries out the reaction 12-(phosphooxy)octadecanoate + H2O = 12-hydroxyoctadecanoate + phosphate. It catalyses the reaction 8,9-epoxy-(5Z,11Z,14Z)-eicosatrienoate + H2O = 8,9-dihydroxy-(5Z,11Z,14Z)-eicosatrienoate. The enzyme catalyses 11,12-epoxy-(5Z,8Z,14Z)-eicosatrienoate + H2O = 11,12-dihydroxy-(5Z,8Z,14Z)-eicosatrienoate. The catalysed reaction is 14,15-epoxy-(5Z,8Z,11Z)-eicosatrienoate + H2O = 14,15-dihydroxy-(5Z,8Z,11Z)-eicosatrienoate. It carries out the reaction 9,10-epoxy-(12Z)-octadecenoate + H2O = 9,10-dihydroxy-(12Z)-octadecenoate. It catalyses the reaction 8-hydroxy-(11S,12S)-epoxy-(5Z,9E,14Z)-eicosatrienoate + H2O = (8,11R,12S)-trihydroxy-(5Z,9E,14Z)-eicosatrienoate. The enzyme catalyses 10-hydroxy-(11S,12S)-epoxy- (5Z,8Z,14Z)-eicosatrienoate + H2O = (10,11S,12R)-trihydroxy-(5Z,8Z,14Z)-eicosatrienoate. The catalysed reaction is 1-tetradecanoyl-sn-glycerol 3-phosphate + H2O = 1-tetradecanoyl-sn-glycerol + phosphate. It carries out the reaction 1-octadecanoyl-sn-glycero-3-phosphate + H2O = 1-octadecanoyl-sn-glycerol + phosphate. It catalyses the reaction 1-(5Z,8Z,11Z,14Z-eicosatetraenoyl)-sn-glycero-3-phosphate + H2O = 1-(5Z,8Z,11Z,14Z-eicosatetraenoyl)-sn-glycerol + phosphate. The enzyme catalyses 1-hexadecanoyl-sn-glycero-3-phosphate + H2O = 1-hexadecanoyl-sn-glycerol + phosphate. The catalysed reaction is 1-(9Z-octadecenoyl)-sn-glycero-3-phosphate + H2O = 1-(9Z-octadecenoyl)-sn-glycerol + phosphate. It carries out the reaction (8S,9R)-epoxy-(5Z,11Z,14Z)-eicosatrienoate + H2O = (8S,9S)-dihydroxy-(5Z,11Z,14Z)-eicosatrienoate. It catalyses the reaction (11S,12R)-epoxy-(5Z,8Z,14Z)-eicosatrienoate + H2O = (11R,12R)-dihydroxy-(5Z,8Z,14Z)-eicosatrienoate. The enzyme catalyses (11S,12R)-epoxy-(5Z,8Z,14Z)-eicosatrienoate + H2O = (11S,12S)-dihydroxy-(5Z,8Z,14Z)-eicosatrienoate. The catalysed reaction is (14S,15R)-epoxy-(5Z,8Z,11Z)-eicosatrienoate + H2O = (14R,15R)-dihydroxy-(5Z,8Z,11Z)-eicosatrienoate. It carries out the reaction (14S,15R)-epoxy-(5Z,8Z,11Z)-eicosatrienoate + H2O = (14S,15S)-dihydroxy-(5Z,8Z,11Z)-eicosatrienoate. It catalyses the reaction (11R,12S)-epoxy-(5Z,8Z,14Z)-eicosatrienoate + H2O = (11S,12S)-dihydroxy-(5Z,8Z,14Z)-eicosatrienoate. The enzyme catalyses (11R,12S)-epoxy-(5Z,8Z,14Z)-eicosatrienoate + H2O = (11R,12R)-dihydroxy-(5Z,8Z,14Z)-eicosatrienoate. The catalysed reaction is (8S,9R)-epoxy-(5Z,11Z,14Z)-eicosatrienoate + H2O = (8R,9R)-dihydroxy-(5Z,11Z,14Z)-eicosatrienoate. It carries out the reaction (14R,15S)-epoxy-(5Z,8Z,11Z)-eicosatrienoate + H2O = (14R,15R)-dihydroxy-(5Z,8Z,11Z)-eicosatrienoate. With respect to regulation, inhibited by 1-(1-acetylpiperidin-4-yl)-3-(4-(trifl uoromethoxy)phenyl)urea (TPAU), 1-cyclohexyl-3-dodecylurea (CDU), 12-(3-adamantan-1-yl-ureido)-dodecanoic acid (AUDA), 1-((3S, 5S, 7S)-adamantan-1-yl)-3-(5-(2-(2-ethoxyethoxy) ethoxy)pentyl)urea (AEPU), N-adamantyl-N[']-cyclohexyl urea (ACU), 4-(((1S, 4S)-4-(3-((3S, 5S, 7S)-adamantan-1-yl) ureido)cyclohexyl)oxy)benzoic acid (c-AUCB), 4-(((1R, 4R)-4-(3-((3S, 5S, 7S)-adamantan-1-yl)ureido)cyclohexyl)oxy)benzoic acid (t-AUCB), 4-(((1R, 4R)-4-(3-(4(trifluoromethoxy)phenyl)ureido)cyclohexyl)oxy)benzoic acid (t-TAUCB) and to a lesser extent by 8-(3-((3S, 5S, 7S)-adamantan-1-yl)ureido) octanoic acid (AUOA). Phosphatase activity is inhibited by dodecyl-phosphate, phospholipids such as phospho-lysophosphatidic acids and fatty acids such as palmitic acid and lauric acid. Functionally, bifunctional enzyme. The C-terminal domain has epoxide hydrolase activity and acts on epoxides (alkene oxides, oxiranes) and arene oxides. Plays a role in xenobiotic metabolism by degrading potentially toxic epoxides. Also determines steady-state levels of physiological mediators. Its function is as follows. Bifunctional enzyme. The N-terminal domain has lipid phosphatase activity, with the highest activity towards threo-9,10-phosphonooxy-hydroxy-octadecanoic acid, followed by erythro-9,10-phosphonooxy-hydroxy-octadecanoic acid, 12-phosphonooxy-octadec-9Z-enoic acid and 12-phosphonooxy-octadec-9E-enoic acid. Has phosphatase activity toward lyso-glycerophospholipids with also some lower activity toward lysolipids of sphingolipid and isoprenoid phosphates. In Homo sapiens (Human), this protein is Bifunctional epoxide hydrolase 2.